The sequence spans 499 residues: Thioredoxin reductase 1, cytoplasmic (499 aa).

FAD-binding positions include 22–23 (SG), 42–43 (DF), 58–59 (TC), and 63–67 (GCIPK). Cys-59 and Cys-64 are joined by a disulfide. At Lys-68 the chain carries N6-succinyllysine. Tyr-131 bears the Phosphotyrosine mark. Residues 131–132 (YG) and Thr-161 each bind FAD. Residues Arg-166, 198–204 (ASYVALE), 221–222 (RS), Arg-226, 226–228 (RGF), 292–293 (GR), and Lys-315 each bind NADP(+). Residue Tyr-200 participates in FAD binding. FAD-binding positions include Asp-334, 341-343 (ELT), and His-472. Glu-341 lines the NADP(+) pocket. His-472 acts as the Proton acceptor in catalysis. The segment at residues 497 to 498 (CU) is a cross-link (cysteinyl-selenocysteine (Cys-Sec)). A non-standard amino acid (selenocysteine) is located at residue Sec-498.

It belongs to the class-I pyridine nucleotide-disulfide oxidoreductase family. In terms of assembly, homodimer. FAD serves as cofactor. In terms of processing, ISGylated.

Its subcellular location is the cytoplasm. The enzyme catalyses [thioredoxin]-dithiol + NADP(+) = [thioredoxin]-disulfide + NADPH + H(+). It carries out the reaction H2O2 + NADPH + H(+) = NADP(+) + 2 H2O. Reduces disulfideprotein thioredoxin (Trx) to its dithiol-containing form. Homodimeric flavoprotein involved in the regulation of cellular redox reactions, growth and differentiation. Contains a selenocysteine residue at the C-terminal active site that is essential for catalysis. Also has reductase activity on hydrogen peroxide (H2O2). The chain is Thioredoxin reductase 1, cytoplasmic (TXNRD1) from Bos taurus (Bovine).